The primary structure comprises 715 residues: Fatty acid oxidation complex subunit alpha (715 aa).

Positions 1 to 190 are enoyl-CoA hydratase/isomerase; that stretch reads MIYQGKAITV…KVGAVDAVVA (190 aa). Residue D297 participates in substrate binding. The tract at residues 312-715 is 3-hydroxyacyl-CoA dehydrogenase; that stretch reads KDVKLAAVLG…MAKNGQKFFG (404 aa). NAD(+)-binding positions include M325, D344, 401-403, K408, and S430; that span reads VVE. H451 serves as the catalytic For 3-hydroxyacyl-CoA dehydrogenase activity. An NAD(+)-binding site is contributed by N454. N501 and Y660 together coordinate substrate.

In the N-terminal section; belongs to the enoyl-CoA hydratase/isomerase family. It in the C-terminal section; belongs to the 3-hydroxyacyl-CoA dehydrogenase family. In terms of assembly, heterotetramer of two alpha chains (FadB) and two beta chains (FadA).

It carries out the reaction a (3S)-3-hydroxyacyl-CoA + NAD(+) = a 3-oxoacyl-CoA + NADH + H(+). The enzyme catalyses a (3S)-3-hydroxyacyl-CoA = a (2E)-enoyl-CoA + H2O. The catalysed reaction is a 4-saturated-(3S)-3-hydroxyacyl-CoA = a (3E)-enoyl-CoA + H2O. It catalyses the reaction (3S)-3-hydroxybutanoyl-CoA = (3R)-3-hydroxybutanoyl-CoA. It carries out the reaction a (3Z)-enoyl-CoA = a 4-saturated (2E)-enoyl-CoA. The enzyme catalyses a (3E)-enoyl-CoA = a 4-saturated (2E)-enoyl-CoA. The protein operates within lipid metabolism; fatty acid beta-oxidation. In terms of biological role, involved in the aerobic and anaerobic degradation of long-chain fatty acids via beta-oxidation cycle. Catalyzes the formation of 3-oxoacyl-CoA from enoyl-CoA via L-3-hydroxyacyl-CoA. It can also use D-3-hydroxyacyl-CoA and cis-3-enoyl-CoA as substrate. This chain is Fatty acid oxidation complex subunit alpha, found in Pseudomonas aeruginosa (strain LESB58).